Consider the following 217-residue polypeptide: Uracil-DNA glycosylase (217 aa).

Asp62 (proton acceptor) is an active-site residue.

This sequence belongs to the uracil-DNA glycosylase (UDG) superfamily. UNG family.

It is found in the cytoplasm. It catalyses the reaction Hydrolyzes single-stranded DNA or mismatched double-stranded DNA and polynucleotides, releasing free uracil.. In terms of biological role, excises uracil residues from the DNA which can arise as a result of misincorporation of dUMP residues by DNA polymerase or due to deamination of cytosine. In Streptococcus pyogenes serotype M4 (strain MGAS10750), this protein is Uracil-DNA glycosylase.